The chain runs to 158 residues: Snaclec coagulation factor X-activating enzyme light chain 2 (158 aa).

Residues 1–23 form the signal peptide; that stretch reads MGRSISVSFGLLAVFLSLSGTGA. Disulfide bonds link C27–C38, C55–C152, and C127–C144. Residues 34 to 153 enclose the C-type lectin domain; it reads YRYFCYRVFK…CEEPYPFVCK (120 aa).

The protein belongs to the snaclec family. In terms of assembly, heterotrimer; disulfide-linked. The heterotrimer consists of 1 heavy chain (a metalloproteinase) and 2 light chains: LC1 and LC2. As to expression, expressed by the venom gland.

It localises to the secreted. Regulatory subunit of the blood coagulation factor X-activating enzyme. Activates coagulation factor X (F10) by cleaving the Arg-Ile bond at position 234, activates coagulation factor IX (F9) by cleaving the Arg-Val bond at position 226 and is also able to activate protein C (PROC). May serve as an exosite by which the enzyme recognizes and binds to the Gla domain of factor X (F10) in a calcium-dependent manner. The polypeptide is Snaclec coagulation factor X-activating enzyme light chain 2 (LC2) (Macrovipera lebetinus (Levantine viper)).